The chain runs to 349 residues: Protein-glutamate methylesterase/protein-glutamine glutaminase 1 (349 aa).

The Response regulatory domain occupies arginine 2 to valine 119. Aspartate 53 is subject to 4-aspartylphosphate. One can recognise a CheB-type methylesterase domain in the interval isoleucine 158–lysine 345. Active-site residues include serine 163, histidine 190, and aspartate 287.

It belongs to the CheB family. In terms of processing, phosphorylated by CheA. Phosphorylation of the N-terminal regulatory domain activates the methylesterase activity.

Its subcellular location is the cytoplasm. The enzyme catalyses [protein]-L-glutamate 5-O-methyl ester + H2O = L-glutamyl-[protein] + methanol + H(+). It carries out the reaction L-glutaminyl-[protein] + H2O = L-glutamyl-[protein] + NH4(+). Its function is as follows. Involved in chemotaxis. Part of a chemotaxis signal transduction system that modulates chemotaxis in response to various stimuli. Catalyzes the demethylation of specific methylglutamate residues introduced into the chemoreceptors (methyl-accepting chemotaxis proteins or MCP) by CheR. Also mediates the irreversible deamidation of specific glutamine residues to glutamic acid. The protein is Protein-glutamate methylesterase/protein-glutamine glutaminase 1 of Methanosarcina acetivorans (strain ATCC 35395 / DSM 2834 / JCM 12185 / C2A).